A 210-amino-acid chain; its full sequence is Transcriptional regulator GfcR (210 aa).

Residues 39-60 (VERSGAATEPEPRAEPEGPDDI) form a disordered region. Residues 48–60 (PEPRAEPEGPDDI) are compositionally biased toward basic and acidic residues.

The protein belongs to the purine/pyrimidine phosphoribosyltransferase family. GfcR subfamily.

With respect to regulation, interaction with effectors modulates GfcR activity. 2-keto-3-deoxy-6-phosphogluconate (KDPG), fructose-1,6-bisphosphate (FBP), 2-keto-3-deoxy-6-phosphogalactonate (KDPGal) and glycerol-3-phosphate (G3P), which are intermediates of sugar and glycerol degradation pathways, can act as inducer molecules. Functionally, DNA-binding transcriptional regulator that functions as a regulator of central sugar catabolic pathways. Is both a local regulator of specific steps in the pathways for D-glucose and D-fructose degradation and a global regulator of hexose catabolism. In the presence of D-glucose, activates expression of the gene encoding the gluconate dehydratase (gad), which is involved in D-glucose catabolism via the semiphosphorylative Entner-Doudoroff (spED) pathway. In the presence of D-fructose, activates expression of the genes encoding the PTS system EIIC component (ptfC) and the fructose-1,6-bisphosphate aldolase (fba), which are involved in D-fructose uptake and degradation via the modified Embden-Meyerhof pathway. In addition, in the presence of D-glucose, D-fructose, D-galactose or glycerol, it activates expression of the genes encoding glyceraldehyde-3-phosphate dehydrogenase (gap) and pyruvate kinase (pykA), enzymes common to all four degradation pathways. Acts by binding directly to the promoter region of the regulated genes. This Haloferax volcanii (strain ATCC 29605 / DSM 3757 / JCM 8879 / NBRC 14742 / NCIMB 2012 / VKM B-1768 / DS2) (Halobacterium volcanii) protein is Transcriptional regulator GfcR.